We begin with the raw amino-acid sequence, 494 residues long: UPF0371 protein M28_Spy1076 (494 aa).

Belongs to the UPF0371 family.

This Streptococcus pyogenes serotype M28 (strain MGAS6180) protein is UPF0371 protein M28_Spy1076.